The following is a 365-amino-acid chain: Protein Wnt-6 (365 aa).

The N-terminal stretch at 1–24 is a signal peptide; sequence MLPPLPSRLGLLLLLLLCPAHVGG. 11 cysteine pairs are disulfide-bonded: Cys76-Cys87, Cys124-Cys132, Cys134-Cys172, Cys222-Cys236, Cys224-Cys231, Cys294-Cys325, Cys310-Cys320, Cys324-Cys364, Cys340-Cys355, Cys342-Cys352, and Cys347-Cys348. N-linked (GlcNAc...) asparagine glycosylation is present at Asn86. A compositionally biased stretch (pro residues) spans 140–158; it reads RAPPRPSGLPGTPGPPGPA. Positions 140–164 are disordered; it reads RAPPRPSGLPGTPGPPGPAGSPEGS. Residue Ser228 is the site of O-palmitoleoyl serine; by PORCN attachment. The N-linked (GlcNAc...) asparagine glycan is linked to Asn311.

The protein belongs to the Wnt family. In terms of assembly, interacts with PORCN. Palmitoleoylation is required for efficient binding to frizzled receptors. Depalmitoleoylation leads to Wnt signaling pathway inhibition. In terms of tissue distribution, expressed in gastric cancer cell lines and gastric cancer tissues (at protein level). Detected in the apical gland region of the gastric foveolar epithelium (at protein level).

It localises to the secreted. Its subcellular location is the extracellular space. The protein resides in the extracellular matrix. Its function is as follows. Ligand for members of the frizzled family of seven transmembrane receptors. Probable developmental protein. May be a signaling molecule which affects the development of discrete regions of tissues. Is likely to signal over only few cell diameters. Together with CAV1 may promote chemoresistance of gastric cancer cells to DNA-damaging anthracycline drugs through the activation of the canonical Wnt receptor signaling pathway. The chain is Protein Wnt-6 (WNT6) from Homo sapiens (Human).